We begin with the raw amino-acid sequence, 378 residues long: Small ribosomal subunit protein bS1 (378 aa).

S1 motif domains follow at residues 1–66, 87–155, 172–242, 259–329, and 346–378; these read ETVT…VSRR, GMEV…LGLK, GTKL…LGLK, GDRV…LGVK, and GAIV…ASEA.

This sequence belongs to the bacterial ribosomal protein bS1 family.

In terms of biological role, binds mRNA; thus facilitating recognition of the initiation point. It is needed to translate mRNA with a short Shine-Dalgarno (SD) purine-rich sequence. This is Small ribosomal subunit protein bS1 (rpsA) from Providencia sp.